The chain runs to 705 residues: Putative membrane protein SCO0839 (705 aa).

The next 12 membrane-spanning stretches (helical) occupy residues tryptophan 16–tyrosine 36, glycine 177–valine 197, leucine 202–valine 222, valine 237–threonine 257, serine 281–leucine 301, isoleucine 316–leucine 336, isoleucine 373–serine 393, leucine 529–leucine 549, leucine 554–phenylalanine 574, valine 587–methionine 607, leucine 627–alanine 647, and leucine 648–leucine 668.

Belongs to the resistance-nodulation-cell division (RND) (TC 2.A.6) family. MmpL subfamily.

The protein resides in the cell membrane. This chain is Putative membrane protein SCO0839, found in Streptomyces coelicolor (strain ATCC BAA-471 / A3(2) / M145).